A 594-amino-acid chain; its full sequence is MHAFRSHTCAELNKSHVGETVRLSGWVHRVRDHGGLLFIDLRDHYGVTQVMADPDSPVFAEIEKVRSEWCIRIDGEVKARDESLVNAKIPTGEIEVFIRDIEVLGKSEELPLMVFGEQEYPEETRLRYRYLDLRREKMQRNMVLRSNMIRSIRNRMWDQGFNEYQTPIITASSPEGARDFLVPSRLHPGKFYALPQAPQQFKQLMMVSGFDKYFQIAPCFRDEDPRADRSPTDFYQLDMEMSFVTQQDVFDTIAPVIAGVFEEFGQGRKVDAPNEWPQISYKDAALWYGSDKPDLRNPIKMQVVSEHFRGSGFAIFAKLLEQEGTEIRAIPAPTGGSRKFCDRMNAFAQKEGLPGMGYIFWREGADGMEAAGPLAKNIGPERTEAIRQQLGLGVGDAAFFLGGKPKTFEAVAGRARNVIGEELNLTDKDRFAFAWIVDFPIYEKDEETGKIDFEHNPFSMPQGGMDALNGDPLDVRGNQYDLACNGYELVSGAIRNHKPEIMFKAFEIAGYGKEEVEKRFGGMVNAFQYGAPPHGGCAAGIDRMVMLLADEANIREVIMFPMNQRAEDLMMAAPSEPMSEQLMELGLRVIPQDD.

Residue E175 coordinates L-aspartate. Residues 199 to 202 are aspartate; it reads QQFK. Residues R221 and H455 each coordinate L-aspartate. Residue 221–223 participates in ATP binding; that stretch reads RDE. E488 lines the ATP pocket. Residue R495 participates in L-aspartate binding. 540–543 is an ATP binding site; the sequence is GIDR.

Belongs to the class-II aminoacyl-tRNA synthetase family. Type 1 subfamily. In terms of assembly, homodimer.

Its subcellular location is the cytoplasm. The enzyme catalyses tRNA(Asx) + L-aspartate + ATP = L-aspartyl-tRNA(Asx) + AMP + diphosphate. Its function is as follows. Aspartyl-tRNA synthetase with relaxed tRNA specificity since it is able to aspartylate not only its cognate tRNA(Asp) but also tRNA(Asn). Reaction proceeds in two steps: L-aspartate is first activated by ATP to form Asp-AMP and then transferred to the acceptor end of tRNA(Asp/Asn). In Ruegeria sp. (strain TM1040) (Silicibacter sp.), this protein is Aspartate--tRNA(Asp/Asn) ligase.